Here is a 499-residue protein sequence, read N- to C-terminus: UDP-N-acetylmuramoyl-L-alanyl-D-glutamate--2,6-diaminopimelate ligase (499 aa).

UDP-N-acetyl-alpha-D-muramoyl-L-alanyl-D-glutamate is bound by residues L30 and S32. 122–128 provides a ligand contact to ATP; it reads GTNGKTT. UDP-N-acetyl-alpha-D-muramoyl-L-alanyl-D-glutamate-binding positions include 164–165, S191, Q197, and R199; that span reads TT. K231 is subject to N6-carboxylysine. Meso-2,6-diaminopimelate contacts are provided by residues R397, 421–424, G472, and E476; that span reads DNPR. Positions 421–424 match the Meso-diaminopimelate recognition motif motif; that stretch reads DNPR.

Belongs to the MurCDEF family. MurE subfamily. The cofactor is Mg(2+). Post-translationally, carboxylation is probably crucial for Mg(2+) binding and, consequently, for the gamma-phosphate positioning of ATP.

The protein localises to the cytoplasm. The enzyme catalyses UDP-N-acetyl-alpha-D-muramoyl-L-alanyl-D-glutamate + meso-2,6-diaminopimelate + ATP = UDP-N-acetyl-alpha-D-muramoyl-L-alanyl-gamma-D-glutamyl-meso-2,6-diaminopimelate + ADP + phosphate + H(+). It participates in cell wall biogenesis; peptidoglycan biosynthesis. In terms of biological role, catalyzes the addition of meso-diaminopimelic acid to the nucleotide precursor UDP-N-acetylmuramoyl-L-alanyl-D-glutamate (UMAG) in the biosynthesis of bacterial cell-wall peptidoglycan. This Blochmanniella floridana protein is UDP-N-acetylmuramoyl-L-alanyl-D-glutamate--2,6-diaminopimelate ligase.